Here is a 100-residue protein sequence, read N- to C-terminus: NADH-ubiquinone oxidoreductase chain 4L (100 aa).

The next 3 membrane-spanning stretches (helical) occupy residues 3-23, 28-48, and 61-81; these read LSKY…GIFL, IIVM…NFLL, and FALL…ALLV.

Belongs to the complex I subunit 4L family. As to quaternary structure, complex I is composed of about 45 different subunits.

It is found in the mitochondrion membrane. It catalyses the reaction a ubiquinone + NADH + 5 H(+)(in) = a ubiquinol + NAD(+) + 4 H(+)(out). Functionally, core subunit of the mitochondrial membrane respiratory chain NADH dehydrogenase (Complex I) that is believed to belong to the minimal assembly required for catalysis. Complex I functions in the transfer of electrons from NADH to the respiratory chain. The immediate electron acceptor for the enzyme is believed to be ubiquinone. The sequence is that of NADH-ubiquinone oxidoreductase chain 4L (ND4L) from Prototheca wickerhamii.